The chain runs to 249 residues: NH(3)-dependent NAD(+) synthetase (249 aa).

Position 29 to 36 (29 to 36 (GVSGGVDS)) interacts with ATP. Aspartate 35 provides a ligand contact to Mg(2+). Arginine 116 contacts deamido-NAD(+). Position 136 (threonine 136) interacts with ATP. Position 141 (glutamate 141) interacts with Mg(2+). Residues lysine 149 and aspartate 156 each contribute to the deamido-NAD(+) site. Positions 165 and 187 each coordinate ATP. Residue 233-234 (HK) participates in deamido-NAD(+) binding.

It belongs to the NAD synthetase family. Homodimer.

It carries out the reaction deamido-NAD(+) + NH4(+) + ATP = AMP + diphosphate + NAD(+) + H(+). Its pathway is cofactor biosynthesis; NAD(+) biosynthesis; NAD(+) from deamido-NAD(+) (ammonia route): step 1/1. Catalyzes the ATP-dependent amidation of deamido-NAD to form NAD. Uses ammonia as a nitrogen source. The chain is NH(3)-dependent NAD(+) synthetase from Syntrophomonas wolfei subsp. wolfei (strain DSM 2245B / Goettingen).